The following is a 166-amino-acid chain: Lipoprotein signal peptidase (166 aa).

Transmembrane regions (helical) follow at residues 11–31, 42–62, 69–89, and 99–119; these read LNLV…LYIL, IYIT…AFGL, VIYN…IFMM, and FFAL…VYTA. Catalysis depends on residues D122 and D140. A helical transmembrane segment spans residues 133-153; the sequence is WFVFNVADIFITIGVFCLILV.

The protein belongs to the peptidase A8 family.

The protein localises to the cell inner membrane. The catalysed reaction is Release of signal peptides from bacterial membrane prolipoproteins. Hydrolyzes -Xaa-Yaa-Zaa-|-(S,diacylglyceryl)Cys-, in which Xaa is hydrophobic (preferably Leu), and Yaa (Ala or Ser) and Zaa (Gly or Ala) have small, neutral side chains.. Its pathway is protein modification; lipoprotein biosynthesis (signal peptide cleavage). This protein specifically catalyzes the removal of signal peptides from prolipoproteins. The chain is Lipoprotein signal peptidase from Pelagibacter ubique (strain HTCC1062).